Consider the following 1301-residue polypeptide: Dentin sialophosphoprotein (1301 aa).

The first 15 residues, 1–15 (MKIITYFCIWAVAWA), serve as a signal peptide directing secretion. 2 N-linked (GlcNAc...) asparagine glycosylation sites follow: asparagine 41 and asparagine 49. The segment at 55–89 (KESGVLVHEGDRGRQENTQDGHKGEGNGSKWAEVG) is disordered. Residues 62–79 (HEGDRGRQENTQDGHKGE) show a composition bias toward basic and acidic residues. Residues asparagine 81, asparagine 130, asparagine 150, asparagine 190, asparagine 191, asparagine 209, and asparagine 222 are each glycosylated (N-linked (GlcNAc...) asparagine). Residues 146-165 (AGATNRSNTNGNTDKNTQNG) show a composition bias toward polar residues. Residues 146-171 (AGATNRSNTNGNTDKNTQNGDVGDAG) form a disordered region. The disordered stretch occupies residues 202 to 1301 (NSCRNEGNTS…SDSNHSTSDD (1100 aa)). Polar residues predominate over residues 203-221 (SCRNEGNTSEITPQINSKR). Residues 251-267 (ADEDEDEGSGDDEDEEA) show a composition bias toward acidic residues. Serine 259 is modified (phosphoserine; by CK1). The segment covering 271–280 (KDSSNNSKGQ) has biased composition (polar residues). N-linked (GlcNAc...) asparagine glycosylation is present at asparagine 275. Composition is skewed to basic and acidic residues over residues 281–293 (EGQD…DHDS) and 300–327 (DSKE…KSEE). Serine 301 carries the phosphoserine modification. An N-linked (GlcNAc...) asparagine glycan is attached at asparagine 336. Residues 340 to 377 (RIEDTQKLNHRESKRVENRITKESETHAVGKSQDKGIE) are compositionally biased toward basic and acidic residues. N-linked (GlcNAc...) asparagine glycosylation is present at asparagine 387. Basic and acidic residues predominate over residues 388–404 (ITKEVGKGNEGKEDKGQ). 2 stretches are compositionally biased toward low complexity: residues 439-452 (SNTG…GYDS) and 462-487 (GDDP…NSSS). Positions 488 to 490 (RGD) match the Cell attachment site motif. A compositionally biased stretch (polar residues) spans 488-506 (RGDASYNSDESKDNGNGSD). Residues 518 to 534 (TSDTNNSDSNGNGNNGN) are compositionally biased toward low complexity. Positions 536 to 549 (DNDKSDSGKGKSDS) are enriched in basic and acidic residues. The span at 555–564 (SDSSNSSDSS) shows a compositional bias: low complexity. The segment covering 581-595 (DSSDSDSSDSSDSDS) has biased composition (acidic residues). Low complexity predominate over residues 596–619 (SDSSNSSDSSDSSDSSDSSDSSDS). Residues 620 to 642 (SDSKSDSSKSESDSSDSDSKSDS) show a composition bias toward basic and acidic residues. Composition is skewed to low complexity over residues 643–705 (SDSN…SDSS), 715–1264 (SSDS…STSD), 1272–1284 (QSKS…NGSD), and 1292–1301 (SDSNHSTSDD).

Interacts with FBLN7. In terms of processing, DSP is glycosylated. Expressed in teeth. DPP is synthesized by odontoblast and transiently expressed by pre-ameloblasts.

It localises to the secreted. The protein localises to the extracellular space. It is found in the extracellular matrix. Functionally, DSP may be an important factor in dentinogenesis. DPP may bind high amount of calcium and facilitate initial mineralization of dentin matrix collagen as well as regulate the size and shape of the crystals. This Homo sapiens (Human) protein is Dentin sialophosphoprotein (DSPP).